The sequence spans 41 residues: Large ribosomal subunit protein bL36 (41 aa).

The protein belongs to the bacterial ribosomal protein bL36 family.

This chain is Large ribosomal subunit protein bL36, found in Rhizobium rhizogenes (strain K84 / ATCC BAA-868) (Agrobacterium radiobacter).